Here is a 377-residue protein sequence, read N- to C-terminus: MSNGIVIIGSGFAARQLVKNIRKQDATIPLTLIAADSIDEYNKPDLSHVISQGQRADDLTRQTAGEFAGQFNLRLFPHTWVTDIDAEAHVVKSQNNQWQYDKLVLATGASAFVPPVPGRELMLTLNSQQEYRACETQLRDARRVLIVGGGLIGSELAMDFCRAGKAVTLIDNAASILASLMPPEVSSRLQHRLTEMGVHLLLKSQLQGLEKTDSGILATLDHQRSIEVDAVIAATGLRPETALARRAGLTINRGVCVDSYLQTSNADIYALGDCAEINGQVLPFLQPIQLSGMVLAKNLLGNNTPLKLPAMLVKIKTPELPLHLAGETQRQDLRWQINTERQGMVARGVDDADQLRAFVVSEDRMKEAFVLLKTLPV.

It belongs to the FAD-dependent oxidoreductase family. FAD serves as cofactor.

Its subcellular location is the cytoplasm. It catalyses the reaction 2 reduced [nitric oxide reductase rubredoxin domain] + NAD(+) + H(+) = 2 oxidized [nitric oxide reductase rubredoxin domain] + NADH. The protein operates within nitrogen metabolism; nitric oxide reduction. One of at least two accessory proteins for anaerobic nitric oxide (NO) reductase. Reduces the rubredoxin moiety of NO reductase. This chain is Nitric oxide reductase FlRd-NAD(+) reductase, found in Shigella flexneri serotype 5b (strain 8401).